The sequence spans 352 residues: Phosphoribosylformylglycinamidine cyclo-ligase (352 aa).

This sequence belongs to the AIR synthase family.

It localises to the cytoplasm. It carries out the reaction 2-formamido-N(1)-(5-O-phospho-beta-D-ribosyl)acetamidine + ATP = 5-amino-1-(5-phospho-beta-D-ribosyl)imidazole + ADP + phosphate + H(+). Its pathway is purine metabolism; IMP biosynthesis via de novo pathway; 5-amino-1-(5-phospho-D-ribosyl)imidazole from N(2)-formyl-N(1)-(5-phospho-D-ribosyl)glycinamide: step 2/2. The polypeptide is Phosphoribosylformylglycinamidine cyclo-ligase (Teredinibacter turnerae (strain ATCC 39867 / T7901)).